A 276-amino-acid polypeptide reads, in one-letter code: MRFSKMHGLGNDFVIIDSITQKVYFNSDKIRSLSNRFYGIGFDQLLVVEPPYDPNIDFHCRIYNADGSEVYQCGNGIRCVARFVCIKKLTNKQHIKISTDTYSMMLSVLDSEFISVNMGEPIFDPIKIPFFSTQYQKMYVLFVPNFTILCGVVSIGNPHCVILVEQVDLVPVTVLGSILENHHCFPKKANISFMQIISQNNIKLRVYERGSGETKACGSAACAAVAIGIQQGLLKKNISVQVNLPGGDLFISWKGLGYPLYMIGSATYIYDGCINL.

Substrate contacts are provided by Asn-11, Gln-44, and Asn-64. The active-site Proton donor is the Cys-73. Residues 74-75 (GN), Asn-157, Asn-190, and 208-209 (ER) each bind substrate. Cys-217 (proton acceptor) is an active-site residue. 218-219 (GS) lines the substrate pocket.

The protein belongs to the diaminopimelate epimerase family. In terms of assembly, homodimer.

The protein resides in the cytoplasm. It carries out the reaction (2S,6S)-2,6-diaminopimelate = meso-2,6-diaminopimelate. It participates in amino-acid biosynthesis; L-lysine biosynthesis via DAP pathway; DL-2,6-diaminopimelate from LL-2,6-diaminopimelate: step 1/1. Catalyzes the stereoinversion of LL-2,6-diaminopimelate (L,L-DAP) to meso-diaminopimelate (meso-DAP), a precursor of L-lysine and an essential component of the bacterial peptidoglycan. This Blochmanniella floridana protein is Diaminopimelate epimerase.